Reading from the N-terminus, the 591-residue chain is Fanconi anemia group C protein homolog (591 aa).

In terms of assembly, belongs to the multisubunit FA complex composed of FANCA, FANCB, FANCC, FANCE, FANCF, FANCG, FANCL/PHF9 and FANCM. This complex may also include HSP70. Interacts with ZBTB32. Upon IFNG induction, interacts with STAT1. Interacts with CDK1. Interacts with EIF2AK2. As to expression, ubiquitous.

The protein resides in the nucleus. It is found in the cytoplasm. Its function is as follows. DNA repair protein that may operate in a postreplication repair or a cell cycle checkpoint function. May be implicated in interstrand DNA cross-link repair and in the maintenance of normal chromosome stability. Upon IFNG induction, may facilitate STAT1 activation by recruiting STAT1 to IFNGR1. The polypeptide is Fanconi anemia group C protein homolog (Fancc) (Mus musculus (Mouse)).